We begin with the raw amino-acid sequence, 595 residues long: 3-hydroxy-3-methylglutaryl-coenzyme A reductase 2 (595 aa).

Asn35 is a glycosylation site (N-linked (GlcNAc...) asparagine). 2 helical membrane passes run Leu48–Leu68 and Ala92–Val112. Residues Gln113–Glu183 are linker. Asn121 carries N-linked (GlcNAc...) asparagine glycosylation. The tract at residues Glu184–Ser595 is catalytic. The active-site Charge relay system is Glu278. N-linked (GlcNAc...) asparagine glycosylation occurs at Asn342. Lys410 functions as the Charge relay system in the catalytic mechanism. N-linked (GlcNAc...) asparagine glycosylation occurs at Asn455. Residue Asp486 is the Charge relay system of the active site. Catalysis depends on His584, which acts as the Proton donor. N-linked (GlcNAc...) asparagine glycosylation is present at Asn588.

This sequence belongs to the HMG-CoA reductase family. Expressed in young flowers and in mature sepals and ovaries.

The protein resides in the endoplasmic reticulum membrane. It carries out the reaction (R)-mevalonate + 2 NADP(+) + CoA = (3S)-3-hydroxy-3-methylglutaryl-CoA + 2 NADPH + 2 H(+). It functions in the pathway metabolic intermediate biosynthesis; (R)-mevalonate biosynthesis; (R)-mevalonate from acetyl-CoA: step 3/3. Catalyzes the synthesis of mevalonate. The specific precursor of all isoprenoid compounds present in plants. The sequence is that of 3-hydroxy-3-methylglutaryl-coenzyme A reductase 2 (HMG2) from Solanum tuberosum (Potato).